We begin with the raw amino-acid sequence, 265 residues long: Type 1 encapsulin shell protein (265 aa).

Residues Arg79 to Thr81 and Trp87 contribute to the FMN site. The pore-forming loop stretch occupies residues Glu184–Pro189. Glu235 lines the FMN pocket.

Belongs to the encapsulin family. Family 1 subfamily. In terms of assembly, this encapsulin nanocompartment is formed by 60 subunits; monomers form pentamers which assemble to form shells. There are 12 pores where the pentamers meet as well as 3-fold axis channels and dimer channels; none are larger than 3-4 Angstroms in diameter. The N-terminus of the protein is inside the shell, the C-terminus is outside. FMN serves as cofactor.

It is found in the encapsulin nanocompartment. Its function is as follows. Shell component of a type 1 encapsulin nanocompartment. Assembles into proteinaceous shells 23-24 nm in diameter with 2-2.5 nm thick walls. Cargo protein Flp (ferritin-like protein, may store iron) is targeted to the interior via its C-terminal extension. The chain is Type 1 encapsulin shell protein from Thermotoga petrophila (strain ATCC BAA-488 / DSM 13995 / JCM 10881 / RKU-1).